The primary structure comprises 338 residues: P2Y purinoceptor 14 (338 aa).

The Extracellular portion of the chain corresponds to 1-29; that stretch reads MNNSTTTDPPNQPCSWNTLITKQIIPVLY. N-linked (GlcNAc...) asparagine glycans are attached at residues asparagine 2 and asparagine 3. Residues 30-50 traverse the membrane as a helical segment; it reads GMVFITGLLLNGISGWIFFYV. Residues 51–55 are Cytoplasmic-facing; the sequence is PSSKS. A helical transmembrane segment spans residues 56–76; sequence FIIYLKNIVVADFLMGLTFPF. Residues 77 to 96 are Extracellular-facing; that stretch reads KVLGDSGLGPWQVNVFVCRV. A disulfide bridge links cysteine 94 with cysteine 172. A helical transmembrane segment spans residues 97-117; the sequence is SAVIFYVNMYVSIVFFGLISF. At 118–139 the chain is on the cytoplasmic side; sequence DRYYKIVKPLLTSIVQSVNYSK. A helical membrane pass occupies residues 140–160; it reads LLSVLVWMLMLLLAVPNIILT. Residues 161–188 are Extracellular-facing; sequence NQGVKEVTKIQCMELKNELGRKWHKASN. A helical transmembrane segment spans residues 189-209; it reads YIFVSIFWVVFLLLIVFYTAI. The Cytoplasmic portion of the chain corresponds to 210-234; that stretch reads TRKIFKSHLKSRKNSTSVKRKSSRN. Residues 235 to 255 form a helical membrane-spanning segment; that stretch reads IFSIVLVFVVCFVPYHIARIP. Over 256–278 the chain is Extracellular; sequence YTKSQTEGHYSCRTKETLLYAKE. Residues 279–299 form a helical membrane-spanning segment; the sequence is FTLLLSAANVCLDPIIYFFLC. The Cytoplasmic segment spans residues 300 to 338; it reads QPFREVLNKKLHMSLKVQNDLEVSKTKRENAIHESTDTL.

Belongs to the G-protein coupled receptor 1 family.

The protein resides in the cell membrane. Functionally, receptor for UDP-glucose coupled to G-proteins. This Mus musculus (Mouse) protein is P2Y purinoceptor 14 (P2ry14).